The sequence spans 317 residues: N-acetyl-gamma-glutamyl-phosphate reductase (317 aa).

Cys-136 is an active-site residue.

It belongs to the NAGSA dehydrogenase family. Type 1 subfamily.

It localises to the cytoplasm. The catalysed reaction is N-acetyl-L-glutamate 5-semialdehyde + phosphate + NADP(+) = N-acetyl-L-glutamyl 5-phosphate + NADPH + H(+). It functions in the pathway amino-acid biosynthesis; L-arginine biosynthesis; N(2)-acetyl-L-ornithine from L-glutamate: step 3/4. Functionally, catalyzes the NADPH-dependent reduction of N-acetyl-5-glutamyl phosphate to yield N-acetyl-L-glutamate 5-semialdehyde. In Stenotrophomonas maltophilia (strain R551-3), this protein is N-acetyl-gamma-glutamyl-phosphate reductase.